A 378-amino-acid chain; its full sequence is Ribosomal RNA large subunit methyltransferase G (378 aa).

It belongs to the methyltransferase superfamily. RlmG family.

The protein localises to the cytoplasm. The catalysed reaction is guanosine(1835) in 23S rRNA + S-adenosyl-L-methionine = N(2)-methylguanosine(1835) in 23S rRNA + S-adenosyl-L-homocysteine + H(+). Its function is as follows. Specifically methylates the guanine in position 1835 (m2G1835) of 23S rRNA. The sequence is that of Ribosomal RNA large subunit methyltransferase G from Shigella flexneri serotype 5b (strain 8401).